A 142-amino-acid polypeptide reads, in one-letter code: Transcription antitermination protein NusB (142 aa).

It belongs to the NusB family.

Involved in transcription antitermination. Required for transcription of ribosomal RNA (rRNA) genes. Binds specifically to the boxA antiterminator sequence of the ribosomal RNA (rrn) operons. The sequence is that of Transcription antitermination protein NusB from Thermotoga sp. (strain RQ2).